The following is a 40-amino-acid chain: Sauvagin (40 aa).

Position 1 is a pyrrolidone carboxylic acid (Gln1). Position 40 is an isoleucine amide (Ile40).

The protein belongs to the sauvagine/corticotropin-releasing factor/urotensin I family.

Its subcellular location is the secreted. Functionally, hypotensive and diuretic peptide. This chain is Sauvagin, found in Phyllomedusa sauvagei (Sauvage's leaf frog).